A 28-amino-acid polypeptide reads, in one-letter code: Peptide 2 (28 aa).

Belongs to the short scorpion toxin superfamily. Potassium channel inhibitor family. Alpha-KTx 09 subfamily. In terms of tissue distribution, expressed by the venom gland.

The protein localises to the secreted. Functionally, blocks potassium channels. This Hottentotta tamulus sindicus (Scorpion) protein is Peptide 2.